The following is a 734-amino-acid chain: Diacylglycerol kinase alpha (734 aa).

EF-hand domains follow at residues 109–144 and 154–189; these read RPED…MMRM and ELRP…TVPL. Residues Asp122, Asp124, Asn126, Glu133, Asp167, Asp169, Ser171, Ser173, and Glu178 each coordinate Ca(2+). 2 Phorbol-ester/DAG-type zinc fingers span residues 204-252 and 268-318; these read QHMW…ALPC and THVW…GHEC. A necessary and sufficient for the diacylglycerol kinase activity region spans residues 358-505; it reads NLSTSEALRI…MDRWSVEVIP (148 aa). The 135-residue stretch at 371–505 folds into the DAGKc domain; the sequence is SNTHPLLVFV…MDRWSVEVIP (135 aa). Residue Lys483 is modified to N6-acetyllysine.

Belongs to the eukaryotic diacylglycerol kinase family. Monomer.

The protein resides in the cytoplasm. The protein localises to the cytosol. It catalyses the reaction a 1,2-diacyl-sn-glycerol + ATP = a 1,2-diacyl-sn-glycero-3-phosphate + ADP + H(+). It carries out the reaction a 1-O-alkyl-sn-glycerol + ATP = a 1-O-alkyl-sn-glycero-3-phosphate + ADP + H(+). The enzyme catalyses 1-O-alkyl-2-acyl-sn-glycerol + ATP = 1-O-alkyl-2-acyl-sn-glycero-3-phosphate + ADP + H(+). The catalysed reaction is 1,2-dihexadecanoyl-sn-glycerol + ATP = 1,2-dihexadecanoyl-sn-glycero-3-phosphate + ADP + H(+). It catalyses the reaction 1-hexadecanoyl-2-(9Z-octadecenoyl)-sn-glycerol + ATP = 1-hexadecanoyl-2-(9Z-octadecenoyl)-sn-glycero-3-phosphate + ADP + H(+). It carries out the reaction 2-(9Z-octadecenoyl)-glycerol + ATP = 2-(9Z-octadecenoyl)-sn-glycero-3-phosphate + ADP + H(+). The enzyme catalyses 1,2-di-(9Z-octadecenoyl)-sn-glycerol + ATP = 1,2-di-(9Z-octadecenoyl)-sn-glycero-3-phosphate + ADP + H(+). The catalysed reaction is 1-octadecanoyl-2-(5Z,8Z,11Z,14Z-eicosatetraenoyl)-sn-glycerol + ATP = 1-octadecanoyl-2-(5Z,8Z,11Z,14Z-eicosatetraenoyl)-sn-glycero-3-phosphate + ADP + H(+). It catalyses the reaction 1,2-didecanoyl-sn-glycerol + ATP = 1,2-didecanoyl-sn-glycero-3-phosphate + ADP + H(+). It carries out the reaction 1-O-hexadecyl-2-acetyl-sn-glycerol + ATP = 1-O-hexadecyl-2-acetyl-sn-glycero-3-phosphate + ADP + H(+). The enzyme catalyses 1-O-hexadecyl-2-(5Z,8Z,11Z,14Z-eicosatetraenoyl)-sn-glycerol + ATP = 1-O-hexadecyl-2-(5Z,8Z,11Z,14Z-eicosatetraenoyl)-sn-glycero-3-phosphate + ADP + H(+). The catalysed reaction is 1-O-hexadecyl-2-(9Z-octadecenoyl)-sn-glycerol + ATP = 1-O-hexadecyl-2-(9Z-octadecenoyl)-sn-glycero-3-phosphate + ADP + H(+). It catalyses the reaction 1-O-hexadecyl-sn-glycerol + ATP = 1-O-hexadecyl-sn-glycero-3-phosphate + ADP + H(+). It participates in lipid metabolism; glycerolipid metabolism. With respect to regulation, stimulated by calcium and phosphatidylserine. Its function is as follows. Diacylglycerol kinase that converts diacylglycerol/DAG into phosphatidic acid/phosphatidate/PA and regulates the respective levels of these two bioactive lipids. Thereby, acts as a central switch between the signaling pathways activated by these second messengers with different cellular targets and opposite effects in numerous biological processes. Also plays an important role in the biosynthesis of complex lipids. Can also phosphorylate 1-alkyl-2-acylglycerol in vitro as efficiently as diacylglycerol provided it contains an arachidonoyl group. Also involved in the production of alkyl-lysophosphatidic acid, another bioactive lipid, through the phosphorylation of 1-alkyl-2-acetyl glycerol. This Sus scrofa (Pig) protein is Diacylglycerol kinase alpha (DGKA).